Here is a 317-residue protein sequence, read N- to C-terminus: METWQEVTVHVHRDAQEAVSHVLIETGSQGVAIADSADYIGQKDRFGELYPDVEQSDMIAITAYYPSSTNLADVTVTINEQLAELASFGLQVGQVTVDSQELAEEDWADNWKKYYEPARITHDLTIVPSWTDYDASAGEKVIKLDPGMAFGTGTHPTTKMSLFAVEQILRGGETVIDVGTGSGVLSIASSLLGAKTIYAYDLDDVAVRVAQENIDLNQGTDNIHVAAGDLLKGVSQEADVIVANILADILVLLTDDAYRLVKDQGYLILSGIISEKLDMVLEAAFSAGFFLETHMIQGEWNALVFKKTDDISGVIGG.

Thr158, Gly179, Asp201, and Asn244 together coordinate S-adenosyl-L-methionine.

It belongs to the methyltransferase superfamily. PrmA family.

Its subcellular location is the cytoplasm. The catalysed reaction is L-lysyl-[protein] + 3 S-adenosyl-L-methionine = N(6),N(6),N(6)-trimethyl-L-lysyl-[protein] + 3 S-adenosyl-L-homocysteine + 3 H(+). In terms of biological role, methylates ribosomal protein L11. This Streptococcus pyogenes serotype M4 (strain MGAS10750) protein is Ribosomal protein L11 methyltransferase.